The chain runs to 674 residues: MAASDAVLDKLESLKNQINYHNKLYYVLDAPELPDAEYDKLFQELQAIEQQFPELVTEDSPTQRVGAAPLDSFASIEHKRPMLSLDNVFNVEELFAFDKRIRDRINADASLEYSCEPKFDGIAASLLYENGRLKTAATRGDGTVGEDITQNMRTIGSVPLKLEGNNIPAVLEVRGEVYMPKAGFLRINEEALAKNEKTFVNPRNAAAGSLRQLNPQITAKRPLVFCAYNVGVVEGGELPATHYETLTQLFEWGFLVSEERRIAKGIEECEAYYHYLEAKRESLAYDIDGIVFKVNAFDLQERLGFVSRAPRWAIAHKFPAQEALTVLHDVEFQVGRTGAITPVAKLQPIFVGGVTVSNATLHNKDEIERLGIRVGDTVIVRRAGDVIPQIVSIVESKRPQDAREIKFPTACPVCGSDVESVEGEAAIRCTGGLVCEAQRKESIKHFASRQAMDIDGLGDKIVDQLVDNKLVNDVADLYTLDIPTLAGLERLGAKSAANLVAAIEASKQTSLDKILYALGIREVGRATARNLANHFCTLNKVMDATQEQLIEVTDVGPVVAHYVVDFFAQANNREVIEKLIAAGVNWPDIEKVDGVKPLEGTTYVLTGSLESLSRDEAKDKLQALGAKVSGSVSAKTTCVVAGPGAGSKLAKAEKLGLAILDEVGLLALLEEHGV.

NAD(+) contacts are provided by residues 35 to 39, 84 to 85, and Glu116; these read DAEYD and SL. Lys118 acts as the N6-AMP-lysine intermediate in catalysis. Residues Arg139, Glu176, Lys293, and Lys317 each contribute to the NAD(+) site. Positions 411, 414, 429, and 435 each coordinate Zn(2+). Positions 593-674 constitute a BRCT domain; that stretch reads DGVKPLEGTT…LLALLEEHGV (82 aa).

Belongs to the NAD-dependent DNA ligase family. LigA subfamily. It depends on Mg(2+) as a cofactor. The cofactor is Mn(2+).

It carries out the reaction NAD(+) + (deoxyribonucleotide)n-3'-hydroxyl + 5'-phospho-(deoxyribonucleotide)m = (deoxyribonucleotide)n+m + AMP + beta-nicotinamide D-nucleotide.. Functionally, DNA ligase that catalyzes the formation of phosphodiester linkages between 5'-phosphoryl and 3'-hydroxyl groups in double-stranded DNA using NAD as a coenzyme and as the energy source for the reaction. It is essential for DNA replication and repair of damaged DNA. The sequence is that of DNA ligase from Saccharophagus degradans (strain 2-40 / ATCC 43961 / DSM 17024).